Reading from the N-terminus, the 280-residue chain is Mastin (280 aa).

Positions 1–15 (MLWLLVLTAPWLGGS) are cleaved as a signal peptide. Residues 16-30 (VPISPDPGLRHEQVG) constitute a propeptide that is removed on maturation. The 245-residue stretch at 31 to 275 (IVGGCKVPAR…YVSWIHQHIP (245 aa)) folds into the Peptidase S1 domain. A disulfide bond links Cys62 and Cys78. The active-site Charge relay system is the His77. Residues Asn106 and Asn117 are each glycosylated (N-linked (GlcNAc...) asparagine). Asp127 serves as the catalytic Charge relay system. Disulfide bonds link Cys161/Cys234, Cys194/Cys215, and Cys224/Cys252. The Charge relay system role is filled by Ser228.

The protein belongs to the peptidase S1 family. As to quaternary structure, oligomer; disulfide-linked. Post-translationally, N-glycosylated. Mononuclear cells within skin, intestine, trachea and lung parenchyma, and polymorphonuclear leukocytes within capillaries and blood.

It is found in the cytoplasm. Inhibited by leupeptin and bis(5-amidino-2-benzimidazolyl)methane (BABIM). Functionally, trypsin-like serine protease. Has a preference for extended substrates with basic residues at the P1 position; Arg is preferred over Lys. Active towards calcitonin gene-related peptide and gelatin. Not active towards substance P, vasoactive intestinal peptide, type I collagen or azocasein. This is Mastin from Canis lupus familiaris (Dog).